A 957-amino-acid polypeptide reads, in one-letter code: Glycine dehydrogenase (decarboxylating) (957 aa).

The residue at position 702 (Lys-702) is an N6-(pyridoxal phosphate)lysine.

It belongs to the GcvP family. In terms of assembly, the glycine cleavage system is composed of four proteins: P, T, L and H. It depends on pyridoxal 5'-phosphate as a cofactor.

The catalysed reaction is N(6)-[(R)-lipoyl]-L-lysyl-[glycine-cleavage complex H protein] + glycine + H(+) = N(6)-[(R)-S(8)-aminomethyldihydrolipoyl]-L-lysyl-[glycine-cleavage complex H protein] + CO2. Functionally, the glycine cleavage system catalyzes the degradation of glycine. The P protein binds the alpha-amino group of glycine through its pyridoxal phosphate cofactor; CO(2) is released and the remaining methylamine moiety is then transferred to the lipoamide cofactor of the H protein. This chain is Glycine dehydrogenase (decarboxylating), found in Bradyrhizobium sp. (strain ORS 278).